We begin with the raw amino-acid sequence, 317 residues long: NADPH-dependent D-xylose reductase (317 aa).

Catalysis depends on Tyr47, which acts as the Proton donor. His109 is a substrate binding site. NADP(+) contacts are provided by residues 164–165 (SN), 213–222 (SSFGPQSFVE), and 269–279 (KSNNPDRLLSN).

The protein belongs to the aldo/keto reductase family.

It catalyses the reaction xylitol + NAD(+) = D-xylose + NADH + H(+). The enzyme catalyses xylitol + NADP(+) = D-xylose + NADPH + H(+). Its pathway is carbohydrate metabolism; D-xylose degradation. In terms of biological role, reduces D-xylose into xylitol. Preferentially utilizes NADPH as a cosubstrate. This is NADPH-dependent D-xylose reductase (XYL1) from Meyerozyma guilliermondii (strain ATCC 6260 / CBS 566 / DSM 6381 / JCM 1539 / NBRC 10279 / NRRL Y-324) (Yeast).